The following is a 172-amino-acid chain: Peptide deformylase (172 aa).

Fe cation is bound by residues C91 and H133. E134 is a catalytic residue. Residue H137 participates in Fe cation binding.

This sequence belongs to the polypeptide deformylase family. The cofactor is Fe(2+).

It catalyses the reaction N-terminal N-formyl-L-methionyl-[peptide] + H2O = N-terminal L-methionyl-[peptide] + formate. Its function is as follows. Removes the formyl group from the N-terminal Met of newly synthesized proteins. Requires at least a dipeptide for an efficient rate of reaction. N-terminal L-methionine is a prerequisite for activity but the enzyme has broad specificity at other positions. This is Peptide deformylase from Vibrio campbellii (strain ATCC BAA-1116).